Consider the following 85-residue polypeptide: Teretoxin Tan9.6 (85 aa).

Positions 1–21 are cleaved as a signal peptide; it reads MMSKTGALLLTFMILVLFSMA. Positions 22–52 are excised as a propeptide; the sequence is AADALGERFEDHEQKIREQDAGVGLLSLMGR.

In terms of processing, contains 3 disulfide bonds. In terms of tissue distribution, expressed by the venom duct.

The protein localises to the secreted. The chain is Teretoxin Tan9.6 from Terebra anilis (Auger snail).